The sequence spans 170 residues: NADH-quinone oxidoreductase subunit B (170 aa).

Positions 42, 43, 107, and 136 each coordinate [4Fe-4S] cluster.

It belongs to the complex I 20 kDa subunit family. As to quaternary structure, NDH-1 is composed of 14 different subunits. Subunits NuoB, C, D, E, F, and G constitute the peripheral sector of the complex. The cofactor is [4Fe-4S] cluster.

The protein resides in the cell inner membrane. It carries out the reaction a quinone + NADH + 5 H(+)(in) = a quinol + NAD(+) + 4 H(+)(out). NDH-1 shuttles electrons from NADH, via FMN and iron-sulfur (Fe-S) centers, to quinones in the respiratory chain. The immediate electron acceptor for the enzyme in this species is believed to be ubiquinone. Couples the redox reaction to proton translocation (for every two electrons transferred, four hydrogen ions are translocated across the cytoplasmic membrane), and thus conserves the redox energy in a proton gradient. The chain is NADH-quinone oxidoreductase subunit B from Campylobacter concisus (strain 13826).